Consider the following 139-residue polypeptide: UPF0102 protein Caul_0175 (139 aa).

Belongs to the UPF0102 family.

The protein is UPF0102 protein Caul_0175 of Caulobacter sp. (strain K31).